The following is a 469-amino-acid chain: MAATSPLRDCQAWKDARLPLSTTSNEACKLFDATLTQYVKWTNDKSLGGIEGCLSKLKAADPTFAMGHAISTGLVLIGTGSSVKLDKELDLAVKTMMEVSRTQPLTRREQLHVSAVETFAKGNFPKACELWEQILQDHPTDMLALKFSHDAYFYLGYQEQMRDSVARIYPFWTPDIPLSSYVKGIYSFGLMETNFYDQAEKLAKEALSINPTDAWSVHTVAHIHEMKAEIKDGLEFMQHSETLWKDSDMLACHNYWHWALYLIEKGEYEAALTIYDTHILPSLQANGAMLDVVDSCSMLYRLQMEGVSVGQRWQDVLPVTRKHSRDHTLLFNDAHFLMASLGAHDPQTTQELLTTLRDASESPGENCQHLLARDVGLPLCQALVEAEDGNPDRVLELLLPIRYRIVQLGGSNAQRDVFNQLLIHAALNCTSSVHKNVARSLLMERDALKPNSPLTERLIRKAATVHLLQ.

A2 bears the N-acetylalanine mark. The residue at position 5 (S5) is a Phosphoserine. TPR repeat units follow at residues 108 to 141 (REQLHVSAVETFAKGNFPKACELWEQILQDHPTD), 180 to 213 (SYVKGIYSFGLMETNFYDQAEKLAKEALSINPTD), and 252 to 285 (CHNYWHWALYLIEKGEYEAALTIYDTHILPSLQA).

This sequence belongs to the TTC38 family.

This is Tetratricopeptide repeat protein 38 (TTC38) from Pongo abelii (Sumatran orangutan).